Consider the following 212-residue polypeptide: Peptide methionine sulfoxide reductase MsrA (212 aa).

Cysteine 52 is a catalytic residue.

This sequence belongs to the MsrA Met sulfoxide reductase family.

It catalyses the reaction L-methionyl-[protein] + [thioredoxin]-disulfide + H2O = L-methionyl-(S)-S-oxide-[protein] + [thioredoxin]-dithiol. The enzyme catalyses [thioredoxin]-disulfide + L-methionine + H2O = L-methionine (S)-S-oxide + [thioredoxin]-dithiol. Has an important function as a repair enzyme for proteins that have been inactivated by oxidation. Catalyzes the reversible oxidation-reduction of methionine sulfoxide in proteins to methionine. The sequence is that of Peptide methionine sulfoxide reductase MsrA from Salmonella paratyphi A (strain AKU_12601).